Here is a 119-residue protein sequence, read N- to C-terminus: Ribosome-binding factor A (119 aa).

It belongs to the RbfA family. In terms of assembly, monomer. Binds 30S ribosomal subunits, but not 50S ribosomal subunits or 70S ribosomes.

It is found in the cytoplasm. Its function is as follows. One of several proteins that assist in the late maturation steps of the functional core of the 30S ribosomal subunit. Associates with free 30S ribosomal subunits (but not with 30S subunits that are part of 70S ribosomes or polysomes). Required for efficient processing of 16S rRNA. May interact with the 5'-terminal helix region of 16S rRNA. This Chlorobium luteolum (strain DSM 273 / BCRC 81028 / 2530) (Pelodictyon luteolum) protein is Ribosome-binding factor A.